The sequence spans 124 residues: Small ribosomal subunit protein uS12 (124 aa).

The segment at M1–P42 is disordered. The residue at position 89 (D89) is a 3-methylthioaspartic acid. A disordered region spans residues A105–E124. The span at G113 to E124 shows a compositional bias: basic residues.

The protein belongs to the universal ribosomal protein uS12 family. In terms of assembly, part of the 30S ribosomal subunit. Contacts proteins S8 and S17. May interact with IF1 in the 30S initiation complex.

Functionally, with S4 and S5 plays an important role in translational accuracy. Its function is as follows. Interacts with and stabilizes bases of the 16S rRNA that are involved in tRNA selection in the A site and with the mRNA backbone. Located at the interface of the 30S and 50S subunits, it traverses the body of the 30S subunit contacting proteins on the other side and probably holding the rRNA structure together. The combined cluster of proteins S8, S12 and S17 appears to hold together the shoulder and platform of the 30S subunit. This chain is Small ribosomal subunit protein uS12, found in Salinibacter ruber (strain DSM 13855 / M31).